The following is a 153-amino-acid chain: 3-hydroxyacyl-[acyl-carrier-protein] dehydratase FabZ (153 aa).

The active site involves His-47.

It belongs to the thioester dehydratase family. FabZ subfamily.

It localises to the cytoplasm. It catalyses the reaction a (3R)-hydroxyacyl-[ACP] = a (2E)-enoyl-[ACP] + H2O. Functionally, involved in unsaturated fatty acids biosynthesis. Catalyzes the dehydration of short chain beta-hydroxyacyl-ACPs and long chain saturated and unsaturated beta-hydroxyacyl-ACPs. In Myxococcus xanthus (strain DK1622), this protein is 3-hydroxyacyl-[acyl-carrier-protein] dehydratase FabZ.